We begin with the raw amino-acid sequence, 185 residues long: Probable nicotinate-nucleotide adenylyltransferase (185 aa).

It belongs to the NadD family.

The catalysed reaction is nicotinate beta-D-ribonucleotide + ATP + H(+) = deamido-NAD(+) + diphosphate. Its pathway is cofactor biosynthesis; NAD(+) biosynthesis; deamido-NAD(+) from nicotinate D-ribonucleotide: step 1/1. Catalyzes the reversible adenylation of nicotinate mononucleotide (NaMN) to nicotinic acid adenine dinucleotide (NaAD). This Methylorubrum extorquens (strain CM4 / NCIMB 13688) (Methylobacterium extorquens) protein is Probable nicotinate-nucleotide adenylyltransferase.